Here is a 482-residue protein sequence, read N- to C-terminus: Tektin (482 aa).

Coiled-coil stretches lie at residues 100-129 (CLAE…QAKI), 171-204 (ARAV…ALRV), 282-324 (RLNE…ALTS), 376-407 (VKVA…DALR), and 441-478 (RTQT…TMGG). Residues 311–330 (EQARAKGQRSALTSALDDKR) are disordered. Residue Arg-462 is modified to Asymmetric dimethylarginine.

Belongs to the tektin family. Asymmetrically dimethylated at Arg-462 during flagellum resorption. Probably methylated by PRMT1.

It localises to the cytoplasm. Its subcellular location is the cytoskeleton. The protein localises to the flagellum axoneme. It is found in the flagellum basal body. Its function is as follows. Structural component of ciliary and flagellar microtubules. Plays a key role in the assembly or attachment of the inner dynein arm to microtubules in flagella and cilia. Forms filamentous polymers in the walls of ciliary and flagellar microtubules. In Chlamydomonas reinhardtii (Chlamydomonas smithii), this protein is Tektin.